We begin with the raw amino-acid sequence, 516 residues long: Cytochrome P450 1A2 (516 aa).

The O-linked (GlcNAc) serine glycan is linked to S69. F226 is a binding site for substrate. C458 provides a ligand contact to heme.

This sequence belongs to the cytochrome P450 family. In terms of assembly, interacts with PGRMC1; the interaction requires PGRMC1 homodimerization. Heme is required as a cofactor.

It is found in the endoplasmic reticulum membrane. The protein localises to the microsome membrane. The catalysed reaction is an organic molecule + reduced [NADPH--hemoprotein reductase] + O2 = an alcohol + oxidized [NADPH--hemoprotein reductase] + H2O + H(+). It carries out the reaction 17beta-estradiol + reduced [NADPH--hemoprotein reductase] + O2 = 2-hydroxy-17beta-estradiol + oxidized [NADPH--hemoprotein reductase] + H2O + H(+). The enzyme catalyses 17beta-estradiol + reduced [NADPH--hemoprotein reductase] + O2 = 4-hydroxy-17beta-estradiol + oxidized [NADPH--hemoprotein reductase] + H2O + H(+). It catalyses the reaction estrone + reduced [NADPH--hemoprotein reductase] + O2 = 2-hydroxyestrone + oxidized [NADPH--hemoprotein reductase] + H2O + H(+). The catalysed reaction is estrone + reduced [NADPH--hemoprotein reductase] + O2 = 4-hydroxyestrone + oxidized [NADPH--hemoprotein reductase] + H2O + H(+). It carries out the reaction cholesterol + reduced [NADPH--hemoprotein reductase] + O2 = 25-hydroxycholesterol + oxidized [NADPH--hemoprotein reductase] + H2O + H(+). The enzyme catalyses all-trans-retinol + reduced [NADPH--hemoprotein reductase] + O2 = all-trans-retinal + oxidized [NADPH--hemoprotein reductase] + 2 H2O + H(+). It catalyses the reaction all-trans-retinal + reduced [NADPH--hemoprotein reductase] + O2 = all-trans-retinoate + oxidized [NADPH--hemoprotein reductase] + H2O + 2 H(+). The catalysed reaction is (5Z,8Z,11Z,14Z)-eicosatetraenoate + reduced [NADPH--hemoprotein reductase] + O2 = (14R,15S)-epoxy-(5Z,8Z,11Z)-eicosatrienoate + oxidized [NADPH--hemoprotein reductase] + H2O + H(+). It carries out the reaction (5Z,8Z,11Z,14Z)-eicosatetraenoate + reduced [NADPH--hemoprotein reductase] + O2 = (14S,15R)-epoxy-(5Z,8Z,11Z)-eicosatrienoate + oxidized [NADPH--hemoprotein reductase] + H2O + H(+). The enzyme catalyses (5Z,8Z,11Z,14Z,17Z)-eicosapentaenoate + reduced [NADPH--hemoprotein reductase] + O2 = (17R,18S)-epoxy-(5Z,8Z,11Z,14Z)-eicosatetraenoate + oxidized [NADPH--hemoprotein reductase] + H2O + H(+). It catalyses the reaction (4Z,7Z,10Z,13Z,16Z,19Z)-docosahexaenoate + reduced [NADPH--hemoprotein reductase] + O2 = (19R,20S)-epoxy-(4Z,7Z,10Z,13Z,16Z)-docosapentaenoate + oxidized [NADPH--hemoprotein reductase] + H2O + H(+). The catalysed reaction is (5S)-hydroperoxy-(6E,8Z,11Z,14Z)-eicosatetraenoate = 5-oxo-(6E,8Z,11Z,14Z)-eicosatetraenoate + H2O. It carries out the reaction (12S)-hydroperoxy-(5Z,8Z,10E,14Z)-eicosatetraenoate = 12-oxo-(5Z,8Z,10E,14Z)-eicosatetraenoate + H2O. The enzyme catalyses (15S)-hydroperoxy-(5Z,8Z,11Z,13E)-eicosatetraenoate = 15-oxo-(5Z,8Z,11Z,13E)-eicosatetraenoate + H2O. It catalyses the reaction (13S)-hydroperoxy-(9Z,11E)-octadecadienoate = 13-oxo-(9Z,11E)-octadecadienoate + H2O. The catalysed reaction is (5Z,8Z,11Z,14Z)-eicosatetraenoate + reduced [NADPH--hemoprotein reductase] + O2 = 13-hydroxy-(5Z,8Z,11Z,14Z)-eicosatetraenoate + oxidized [NADPH--hemoprotein reductase] + H2O + H(+). It carries out the reaction (5Z,8Z,11Z,14Z)-eicosatetraenoate + reduced [NADPH--hemoprotein reductase] + O2 = 19-hydroxy-(5Z,8Z,11Z,14Z)-eicosatetraenoate + oxidized [NADPH--hemoprotein reductase] + H2O + H(+). The enzyme catalyses (9Z,12Z)-octadecadienoate + reduced [NADPH--hemoprotein reductase] + O2 = 11-hydroxy-(9Z,12Z)-octadecadienoate + oxidized [NADPH--hemoprotein reductase] + H2O + H(+). Its pathway is cofactor metabolism; retinol metabolism. The protein operates within steroid metabolism; cholesterol metabolism. It participates in lipid metabolism; arachidonate metabolism. In terms of biological role, a cytochrome P450 monooxygenase involved in the metabolism of various endogenous substrates, including fatty acids, steroid hormones and vitamins. Mechanistically, uses molecular oxygen inserting one oxygen atom into a substrate, and reducing the second into a water molecule, with two electrons provided by NADPH via cytochrome P450 reductase (NADPH--hemoprotein reductase). Catalyzes the hydroxylation of carbon-hydrogen bonds. Exhibits high catalytic activity for the formation of hydroxyestrogens from estrone (E1) and 17beta-estradiol (E2), namely 2-hydroxy E1 and E2. Metabolizes cholesterol toward 25-hydroxycholesterol, a physiological regulator of cellular cholesterol homeostasis. May act as a major enzyme for all-trans retinoic acid biosynthesis in the liver. Catalyzes two successive oxidative transformation of all-trans retinol to all-trans retinal and then to the active form all-trans retinoic acid. Primarily catalyzes stereoselective epoxidation of the last double bond of polyunsaturated fatty acids (PUFA), displaying a strong preference for the (R,S) stereoisomer. Catalyzes bisallylic hydroxylation and omega-1 hydroxylation of PUFA. May also participate in eicosanoids metabolism by converting hydroperoxide species into oxo metabolites (lipoxygenase-like reaction, NADPH-independent). Plays a role in the oxidative metabolism of xenobiotics. Catalyzes the N-hydroxylation of heterocyclic amines and the O-deethylation of phenacetin. Metabolizes caffeine via N3-demethylation. This is Cytochrome P450 1A2 (CYP1A2) from Pongo abelii (Sumatran orangutan).